A 470-amino-acid polypeptide reads, in one-letter code: Uronate isomerase (470 aa).

The protein belongs to the metallo-dependent hydrolases superfamily. Uronate isomerase family.

The catalysed reaction is D-glucuronate = D-fructuronate. It catalyses the reaction aldehydo-D-galacturonate = keto-D-tagaturonate. The protein operates within carbohydrate metabolism; pentose and glucuronate interconversion. In Salmonella heidelberg (strain SL476), this protein is Uronate isomerase.